Reading from the N-terminus, the 231-residue chain is Ribose-5-phosphate isomerase A (231 aa).

Substrate contacts are provided by residues 32–35 (TGST), 85–88 (DGAD), and 98–101 (KGGG). The active-site Proton acceptor is glutamate 107. Residue lysine 125 participates in substrate binding.

Belongs to the ribose 5-phosphate isomerase family. As to quaternary structure, homodimer.

It catalyses the reaction aldehydo-D-ribose 5-phosphate = D-ribulose 5-phosphate. It functions in the pathway carbohydrate degradation; pentose phosphate pathway; D-ribose 5-phosphate from D-ribulose 5-phosphate (non-oxidative stage): step 1/1. In terms of biological role, catalyzes the reversible conversion of ribose-5-phosphate to ribulose 5-phosphate. The sequence is that of Ribose-5-phosphate isomerase A from Paraburkholderia phytofirmans (strain DSM 17436 / LMG 22146 / PsJN) (Burkholderia phytofirmans).